The chain runs to 45 residues: Photosystem II reaction center protein K (45 aa).

Residues 1 to 8 (MDVNFLLS) constitute a propeptide that is removed on maturation. Residues 20–40 (IVDVMPAIPVFFLLLAFVWQA) form a helical membrane-spanning segment.

Belongs to the PsbK family. PSII is composed of 1 copy each of membrane proteins PsbA, PsbB, PsbC, PsbD, PsbE, PsbF, PsbH, PsbI, PsbJ, PsbK, PsbL, PsbM, PsbT, PsbX, PsbY, PsbZ, Psb30/Ycf12, at least 3 peripheral proteins of the oxygen-evolving complex and a large number of cofactors. It forms dimeric complexes.

It localises to the plastid. Its subcellular location is the chloroplast thylakoid membrane. Functionally, one of the components of the core complex of photosystem II (PSII). PSII is a light-driven water:plastoquinone oxidoreductase that uses light energy to abstract electrons from H(2)O, generating O(2) and a proton gradient subsequently used for ATP formation. It consists of a core antenna complex that captures photons, and an electron transfer chain that converts photonic excitation into a charge separation. The sequence is that of Photosystem II reaction center protein K from Emiliania huxleyi (Coccolithophore).